We begin with the raw amino-acid sequence, 859 residues long: Probable helicase A859L (859 aa).

Residues 178–349 (YQELQRSGRA…KNRDLFGGVA (172 aa)) enclose the Helicase ATP-binding domain. 191–198 (MACRCGKT) contacts ATP. A DEAH box motif is present at residues 298–301 (DECH). Residues 394-553 (QIIMALAYLK…RFYEHLLNPS (160 aa)) form the Helicase C-terminal domain.

This sequence belongs to the asfivirus helicase A859L family.

The protein is Probable helicase A859L of Ornithodoros (relapsing fever ticks).